Consider the following 1134-residue polypeptide: Myosin-4 (1134 aa).

The 51-residue stretch at 110–160 (REKLCVWCRVAANGQWHLGKIHSTSSSDDVCVMLSANDDVRTMEEIFPANP) folds into the Myosin N-terminal SH3-like domain. In terms of domain architecture, Myosin motor spans 164–830 (EGVEDLTQLS…VISVLEERKK (667 aa)). Residues 255 to 262 (GESGAGKT) and 304 to 312 (NDNSSRFGK) each bind ATP. 2 actin-binding regions span residues 589 to 623 (LIEK…KQHL) and 710 to 732 (LFKL…KPNS). IQ domains lie at 832–861 (VLRG…AAVI), 855–884 (MRNA…SAIV), and 891–920 (ELDA…KNKP). The segment at 913–939 (STQQKNKPRNEKKKTRRKSTKRVSEDK) is disordered. The segment covering 918 to 933 (NKPRNEKKKTRRKSTK) has biased composition (basic residues). Residues 953–999 (LADLQSRVLKVEAAIMQKEDENTALQEELQRFEERWLENETRMKSME) are a coiled coil.

Belongs to the TRAFAC class myosin-kinesin ATPase superfamily. Myosin family. Plant myosin class VIII subfamily. In terms of assembly, homodimer.

Its function is as follows. Myosin heavy chain that is required for the cell cycle-regulated transport of various organelles and proteins for their segregation. Functions by binding with its tail domain to receptor proteins on organelles and exerting force with its N-terminal motor domain against actin filaments, thereby transporting its cargo along polarized actin cables. The polypeptide is Myosin-4 (VIII-B) (Arabidopsis thaliana (Mouse-ear cress)).